A 613-amino-acid polypeptide reads, in one-letter code: Chaperone protein DnaK (613 aa).

The tract at residues 578-613 (MYQSQATQGTSQNSSQNNNSQNNNGDTVDADFKESK) is disordered. The segment covering 580–602 (QSQATQGTSQNSSQNNNSQNNNG) has biased composition (low complexity).

This sequence belongs to the heat shock protein 70 family.

In terms of biological role, acts as a chaperone. In Picrophilus torridus (strain ATCC 700027 / DSM 9790 / JCM 10055 / NBRC 100828 / KAW 2/3), this protein is Chaperone protein DnaK.